The primary structure comprises 142 residues: MKYLGLALISAVFLIGTCQAETPSQKCEEKYKENAERKACIHHCKYQYYGFIDVNYNIAQPEIRKFSNVLMDYGVVDRSKKRELKKVMHDCAKKIKKEARTGDHWLNCRTSIDYYRCVLTSKLIGPQRFDKAIQDYDKTISV.

A signal peptide spans 1–20; that stretch reads MKYLGLALISAVFLIGTCQA. Cystine bridges form between C27-C44, C40-C108, and C91-C117.

It belongs to the PBP/GOBP family. In terms of tissue distribution, female salivary gland.

Its subcellular location is the secreted. In terms of biological role, inhibits contact coagulation pathway activation in the host by sequestering anionic polymers, such as dextran sulfate and heparin, and thus blocking interaction of protein components of the pathway with negatively charged surfaces. Inhibits dextran sulfate-mediated autoactivation of host coagulation factor XII (F12). Inhibits dextran sulfate-mediated activation of host factor XI (F11) by activated F12. Inhibits polyphosphate-induced plasma extravasation at the injection site in mouse model, probably via inhibition of bradykinin generation in host skin. In Phlebotomus duboscqi (Sandfly), this protein is Salivary protein 15b.